The following is a 213-amino-acid chain: NADH dehydrogenase [ubiquinone] iron-sulfur protein 7, mitochondrial (213 aa).

The N-terminal 37 residues, 1-37 (MAVLSAPGLRGFRILGLRSSVGPAVQARSVHQSVATD), are a transit peptide targeting the mitochondrion. Over residues 30 to 44 (VHQSVATDGPSSTQP) the composition is skewed to polar residues. Residues 30–53 (VHQSVATDGPSSTQPALPKARAVA) are disordered. [4Fe-4S] cluster is bound by residues cysteine 88 and cysteine 89. Residue arginine 111 is modified to Hydroxyarginine. Positions 153 and 183 each coordinate [4Fe-4S] cluster.

It belongs to the complex I 20 kDa subunit family. Core subunit of respiratory chain NADH dehydrogenase (Complex I) which is composed of 45 different subunits. This is a component of the iron-sulfur (IP) fragment of the enzyme. [4Fe-4S] cluster is required as a cofactor. Post-translationally, hydroxylated ar Arg-111 by NDUFAF5 early in the pathway of assembly of complex I, before the formation of the juncture between peripheral and membrane arms.

It localises to the mitochondrion inner membrane. It catalyses the reaction a ubiquinone + NADH + 5 H(+)(in) = a ubiquinol + NAD(+) + 4 H(+)(out). In terms of biological role, core subunit of the mitochondrial membrane respiratory chain NADH dehydrogenase (Complex I) which catalyzes electron transfer from NADH through the respiratory chain, using ubiquinone as an electron acceptor. Essential for the catalytic activity of complex I. The chain is NADH dehydrogenase [ubiquinone] iron-sulfur protein 7, mitochondrial (NDUFS7) from Pan troglodytes (Chimpanzee).